The chain runs to 369 residues: S-(hydroxymethyl)glutathione dehydrogenase (369 aa).

7 residues coordinate Zn(2+): Cys40, His62, Cys92, Cys95, Cys98, Cys106, and Cys169.

The protein belongs to the zinc-containing alcohol dehydrogenase family. Class-III subfamily. In terms of assembly, homodimer. It depends on Zn(2+) as a cofactor.

The protein localises to the cytoplasm. It catalyses the reaction S-(hydroxymethyl)glutathione + NADP(+) = S-formylglutathione + NADPH + H(+). The catalysed reaction is S-(hydroxymethyl)glutathione + NAD(+) = S-formylglutathione + NADH + H(+). It carries out the reaction a primary alcohol + NAD(+) = an aldehyde + NADH + H(+). The enzyme catalyses a secondary alcohol + NAD(+) = a ketone + NADH + H(+). It catalyses the reaction S-nitrosoglutathione + NADH + H(+) = S-(hydroxysulfenamide)glutathione + NAD(+). Its function is as follows. Has high formaldehyde dehydrogenase activity in the presence of glutathione and catalyzes the oxidation of normal alcohols in a reaction that is not GSH-dependent. In addition, hemithiolacetals other than those formed from GSH, including omega-thiol fatty acids, also are substrates. Also acts as a S-nitroso-glutathione reductase by catalyzing the NADH-dependent reduction of S-nitrosoglutathione. The sequence is that of S-(hydroxymethyl)glutathione dehydrogenase (frmA) from Escherichia coli (strain ATCC 8739 / DSM 1576 / NBRC 3972 / NCIMB 8545 / WDCM 00012 / Crooks).